The sequence spans 142 residues: Large ribosomal subunit protein uL16 (142 aa).

Belongs to the universal ribosomal protein uL16 family. Part of the 50S ribosomal subunit.

Binds 23S rRNA and is also seen to make contacts with the A and possibly P site tRNAs. The chain is Large ribosomal subunit protein uL16 from Mycoplasmopsis pulmonis (strain UAB CTIP) (Mycoplasma pulmonis).